Here is a 743-residue protein sequence, read N- to C-terminus: Zinc finger CCHC domain-containing protein 8 (743 aa).

The stretch at 29–67 forms a coiled coil; sequence DSEGEANDVQELVSQHEETINRLSAENQELKRRLSLLNR. Residues 213–230 form a CCHC-type zinc finger; that stretch reads PCCFNCGSEEHQMRDCPK. 5 disordered regions span residues 390–432, 449–518, 540–566, 600–649, and 662–700; these read YLTD…SAVM, KGYM…VLDE, GEST…SRTE, EGGP…EDSN, and NKLS…VPDV. Residues 399 to 413 are compositionally biased toward low complexity; the sequence is SSNKSNKRSSCQSSS. Residues 455–504 are compositionally biased toward pro residues; the sequence is PPLPPGSPSYGTPPPLPRGTPPSTPPNFIPPPPPTPTPPPLPKGTPPPTP. Composition is skewed to low complexity over residues 551–564 and 601–637; these read TPIT…SPSR and GGPL…GPLI. Residues 638 to 649 show a composition bias toward acidic residues; that stretch reads PEEDSETNEDSN. Residues 666 to 677 show a composition bias toward basic and acidic residues; it reads SKHENASEKNPS.

Belongs to the ZCCHC8 family.

The protein localises to the nucleus. It is found in the nucleoplasm. Its function is as follows. Scaffolding subunit of the trimeric nuclear exosome targeting (NEXT) complex that is involved in the surveillance and turnover of aberrant transcripts and non-coding RNAs. NEXT functions as an RNA exosome cofactor that directs a subset of non-coding short-lived RNAs for exosomal degradation. May be involved in pre-mRNA splicing. It is required for 3'-end maturation of telomerase RNA component (TERC), TERC 3'-end targeting to the nuclear RNA exosome, and for telomerase function. This Xenopus laevis (African clawed frog) protein is Zinc finger CCHC domain-containing protein 8 (zcchc8).